The primary structure comprises 119 residues: Protein TusC (119 aa).

This sequence belongs to the DsrF/TusC family. Heterohexamer, formed by a dimer of trimers. The hexameric TusBCD complex contains 2 copies each of TusB, TusC and TusD. The TusBCD complex interacts with TusE.

It localises to the cytoplasm. Its function is as follows. Part of a sulfur-relay system required for 2-thiolation of 5-methylaminomethyl-2-thiouridine (mnm(5)s(2)U) at tRNA wobble positions. This Serratia proteamaculans (strain 568) protein is Protein TusC.